Consider the following 159-residue polypeptide: 2-C-methyl-D-erythritol 2,4-cyclodiphosphate synthase (159 aa).

Residues D10 and H12 each contribute to the a divalent metal cation site. Residues 10-12 (DVH) and 36-37 (HS) contribute to the 4-CDP-2-C-methyl-D-erythritol 2-phosphate site. H44 is an a divalent metal cation binding site. 4-CDP-2-C-methyl-D-erythritol 2-phosphate contacts are provided by residues 58–60 (DIG), 63–67 (FPDTD), 102–108 (AQAPKMA), 134–137 (TTTE), F141, and R144.

This sequence belongs to the IspF family. As to quaternary structure, homotrimer. A divalent metal cation is required as a cofactor.

The enzyme catalyses 4-CDP-2-C-methyl-D-erythritol 2-phosphate = 2-C-methyl-D-erythritol 2,4-cyclic diphosphate + CMP. Its pathway is isoprenoid biosynthesis; isopentenyl diphosphate biosynthesis via DXP pathway; isopentenyl diphosphate from 1-deoxy-D-xylulose 5-phosphate: step 4/6. Its function is as follows. Involved in the biosynthesis of isopentenyl diphosphate (IPP) and dimethylallyl diphosphate (DMAPP), two major building blocks of isoprenoid compounds. Catalyzes the conversion of 4-diphosphocytidyl-2-C-methyl-D-erythritol 2-phosphate (CDP-ME2P) to 2-C-methyl-D-erythritol 2,4-cyclodiphosphate (ME-CPP) with a corresponding release of cytidine 5-monophosphate (CMP). This is 2-C-methyl-D-erythritol 2,4-cyclodiphosphate synthase from Shewanella frigidimarina (strain NCIMB 400).